The following is a 236-amino-acid chain: Small ribosomal subunit protein uS2c (236 aa).

This sequence belongs to the universal ribosomal protein uS2 family.

It localises to the plastid. The protein resides in the chloroplast. The protein is Small ribosomal subunit protein uS2c (rps2) of Pisum sativum (Garden pea).